Reading from the N-terminus, the 748-residue chain is Acyl-coenzyme A oxidase (748 aa).

The protein belongs to the acyl-CoA oxidase family. FAD is required as a cofactor.

It is found in the peroxisome. It catalyses the reaction a 2,3-saturated acyl-CoA + O2 = a (2E)-enoyl-CoA + H2O2. It participates in lipid metabolism; peroxisomal fatty acid beta-oxidation. This chain is Acyl-coenzyme A oxidase (POX1), found in Candida glabrata (strain ATCC 2001 / BCRC 20586 / JCM 3761 / NBRC 0622 / NRRL Y-65 / CBS 138) (Yeast).